The primary structure comprises 318 residues: Ferredoxin--NADP reductase (318 aa).

FAD contacts are provided by D33, Q41, Y46, V84, F115, D276, and T316.

This sequence belongs to the ferredoxin--NADP reductase type 2 family. In terms of assembly, homodimer. The cofactor is FAD.

The catalysed reaction is 2 reduced [2Fe-2S]-[ferredoxin] + NADP(+) + H(+) = 2 oxidized [2Fe-2S]-[ferredoxin] + NADPH. This is Ferredoxin--NADP reductase from Lactobacillus johnsonii (strain CNCM I-12250 / La1 / NCC 533).